Reading from the N-terminus, the 237-residue chain is Ribose-5-phosphate isomerase A (237 aa).

Substrate contacts are provided by residues 30–33 (SGST), 87–90 (DGAD), and 100–103 (KGGG). Glutamate 109 functions as the Proton acceptor in the catalytic mechanism. Substrate is bound at residue lysine 127.

Belongs to the ribose 5-phosphate isomerase family. As to quaternary structure, homodimer.

It carries out the reaction aldehydo-D-ribose 5-phosphate = D-ribulose 5-phosphate. It functions in the pathway carbohydrate degradation; pentose phosphate pathway; D-ribose 5-phosphate from D-ribulose 5-phosphate (non-oxidative stage): step 1/1. Catalyzes the reversible conversion of ribose-5-phosphate to ribulose 5-phosphate. This chain is Ribose-5-phosphate isomerase A, found in Prochlorococcus marinus (strain MIT 9211).